The sequence spans 288 residues: uncharacterized protein (288 aa).

Residues 107-288 (KQIPTLIGPQ…LAIQLLASIA (182 aa)) form the ATP-grasp domain. ATP-binding positions include K145 and 178–188 (QQYIATSNSEA). Residues D248, E261, and N263 each coordinate Mg(2+). Positions 248, 261, and 263 each coordinate Mn(2+).

This sequence belongs to the RimK family.

This is an uncharacterized protein from Mycoplasma pneumoniae (strain ATCC 29342 / M129 / Subtype 1) (Mycoplasmoides pneumoniae).